Consider the following 551-residue polypeptide: uncharacterized protein (551 aa).

Residues 1–7 are Cytoplasmic-facing; the sequence is MKKNSSV. A helical transmembrane segment spans residues 8 to 28; the sequence is VFFLVGLSQFVTMAFLIIGSI. The Vacuolar segment spans residues 29–88; it reads TAPIFKQIGYSKYDEITYGTFGYCKEGSCSKASYNYHPDELSDSDSNWKLNSNARSILGK. The chain crosses the membrane as a helical span at residues 89 to 109; sequence IIFITPIAAGLNFLGFLCTIM. The Cytoplasmic portion of the chain corresponds to 110-135; that stretch reads SVLLINVLSSDRVGSASAIMFFVNLT. Residues 136-156 traverse the membrane as a helical segment; the sequence is FSTLGFLSASLICIVVFLLFY. Over 157 to 160 the chain is Vacuolar; sequence PHVT. The chain crosses the membrane as a helical span at residues 161–181; that stretch reads WCSWVLIPGAALSLLVIPLIF. Residues 182 to 551 lie on the Cytoplasmic side of the membrane; the sequence is SAYSRSSGSR…TSLNNPYGFR (370 aa). 2 positions are modified to phosphoserine: S224 and S232. Residues 280–341 are disordered; it reads AKDMENSNGS…NGSNTSNNIN (62 aa). The span at 307 to 320 shows a compositional bias: polar residues; sequence TSTYSVIESESGLK. Residues 321 to 341 are compositionally biased toward low complexity; the sequence is NGSVSNNYVRNNGSNTSNNIN. At S363 the chain carries Phosphoserine.

In terms of assembly, forms homo dimers or homooligomers in MCC microdomains. Interacts with BOI2 and RHO3, two key regulators of secretion.

Its subcellular location is the vacuole membrane. It is found in the cell membrane. Its function is as follows. Protein involved in secretion and cell wall organization. Contributes to cell surface-related functions as a auxiliary component of MCC/eisosome that specifically interacts with the secretory pathway. This is an uncharacterized protein from Saccharomyces cerevisiae (strain ATCC 204508 / S288c) (Baker's yeast).